Consider the following 323-residue polypeptide: UPF0200/UPF0201 protein AF_1395 (323 aa).

Residues 1 to 185 (MVLEMKVIAF…EKIRQILLKL (185 aa)) are UPF0200. ATP is bound at residue 12-19 (GYPLSGKS). The UPF0201 stretch occupies residues 186-323 (AKNVEIEIRT…GRPVKEIDKL (138 aa)).

The protein in the N-terminal section; belongs to the UPF0200 family. In the C-terminal section; belongs to the UPF0201 family.

This is UPF0200/UPF0201 protein AF_1395 from Archaeoglobus fulgidus (strain ATCC 49558 / DSM 4304 / JCM 9628 / NBRC 100126 / VC-16).